The chain runs to 233 residues: Metallo-beta-lactamase domain-containing protein 1 (233 aa).

Residues His96, His98, Asp100, His101, His152, Asp174, and His213 each coordinate Zn(2+).

This sequence belongs to the metallo-beta-lactamase superfamily. Glyoxalase II family. As to quaternary structure, homodimer. Requires Zn(2+) as cofactor.

Its subcellular location is the cytoplasm. The protein resides in the cytosol. It is found in the nucleus. The enzyme catalyses a ribonucleotidyl-ribonucleotide-RNA + H2O = a 3'-end ribonucleotide-RNA + a 5'-end 5'-phospho-ribonucleoside-RNA + H(+). Functionally, endoribonuclease that catalyzes the hydrolysis of histone-coding pre-mRNA 3'-end. Involved in histone pre-mRNA processing during the S-phase of the cell cycle, which is required for entering/progressing through S-phase. Cleaves histone pre-mRNA at a major and a minor cleavage site after the 5'-ACCCA-3' and the 5'-ACCCACA-3' sequence, respectively, and located downstream of the stem-loop. May require the presence of the HDE element located at the histone pre-RNA 3'-end to avoid non-specific cleavage. The protein is Metallo-beta-lactamase domain-containing protein 1 (mblac1) of Xenopus laevis (African clawed frog).